A 227-amino-acid chain; its full sequence is 2,3-bisphosphoglycerate-dependent phosphoglycerate mutase (227 aa).

Substrate-binding positions include 7 to 14 (RHGFSEWN), 20 to 21 (TG), R59, 86 to 89 (ERHY), K97, 113 to 114 (RR), and 182 to 183 (GN). H8 functions as the Tele-phosphohistidine intermediate in the catalytic mechanism. Catalysis depends on E86, which acts as the Proton donor/acceptor.

It belongs to the phosphoglycerate mutase family. BPG-dependent PGAM subfamily. Homodimer.

It catalyses the reaction (2R)-2-phosphoglycerate = (2R)-3-phosphoglycerate. It participates in carbohydrate degradation; glycolysis; pyruvate from D-glyceraldehyde 3-phosphate: step 3/5. Functionally, catalyzes the interconversion of 2-phosphoglycerate and 3-phosphoglycerate. The protein is 2,3-bisphosphoglycerate-dependent phosphoglycerate mutase of Haemophilus influenzae (strain 86-028NP).